The sequence spans 331 residues: Ketol-acid reductoisomerase (NADP(+)) (331 aa).

The KARI N-terminal Rossmann domain maps to 2-182 (ARMYYDSDAN…GGTRAGILET (181 aa)). NADP(+) contacts are provided by residues 25–28 (YGSQ), serine 51, serine 53, and 83–86 (DEVQ). Histidine 108 is an active-site residue. Residue glycine 134 coordinates NADP(+). The 146-residue stretch at 183–328 (TFREETETDL…KDLRAMFSWL (146 aa)) folds into the KARI C-terminal knotted domain. Residues aspartate 191, glutamate 195, glutamate 227, and glutamate 231 each contribute to the Mg(2+) site. Substrate is bound at residue serine 252.

The protein belongs to the ketol-acid reductoisomerase family. The cofactor is Mg(2+).

It carries out the reaction (2R)-2,3-dihydroxy-3-methylbutanoate + NADP(+) = (2S)-2-acetolactate + NADPH + H(+). The catalysed reaction is (2R,3R)-2,3-dihydroxy-3-methylpentanoate + NADP(+) = (S)-2-ethyl-2-hydroxy-3-oxobutanoate + NADPH + H(+). It functions in the pathway amino-acid biosynthesis; L-isoleucine biosynthesis; L-isoleucine from 2-oxobutanoate: step 2/4. The protein operates within amino-acid biosynthesis; L-valine biosynthesis; L-valine from pyruvate: step 2/4. Functionally, involved in the biosynthesis of branched-chain amino acids (BCAA). Catalyzes an alkyl-migration followed by a ketol-acid reduction of (S)-2-acetolactate (S2AL) to yield (R)-2,3-dihydroxy-isovalerate. In the isomerase reaction, S2AL is rearranged via a Mg-dependent methyl migration to produce 3-hydroxy-3-methyl-2-ketobutyrate (HMKB). In the reductase reaction, this 2-ketoacid undergoes a metal-dependent reduction by NADPH to yield (R)-2,3-dihydroxy-isovalerate. This Trichodesmium erythraeum (strain IMS101) protein is Ketol-acid reductoisomerase (NADP(+)).